The sequence spans 205 residues: High frequency lysogenization protein HflD homolog (205 aa).

This sequence belongs to the HflD family.

It is found in the cytoplasm. The protein resides in the cell inner membrane. This chain is High frequency lysogenization protein HflD homolog, found in Shewanella oneidensis (strain ATCC 700550 / JCM 31522 / CIP 106686 / LMG 19005 / NCIMB 14063 / MR-1).